The chain runs to 361 residues: 4-oxalomesaconate tautomerase (361 aa).

It belongs to the PrpF family.

It carries out the reaction (1E)-4-oxobut-1-ene-1,2,4-tricarboxylate = 4-carboxy-2-hydroxy-cis,cis-muconate. Its function is as follows. Catalyzes the tautomerization of the 4-oxalomesaconic acid keto (OMAketo) generated by GalA dioxygenase to 4-oxalomesaconic acid enol (OMAenol). Mediates the second step in gallate degradation pathway. This Pseudomonas putida (strain ATCC 47054 / DSM 6125 / CFBP 8728 / NCIMB 11950 / KT2440) protein is 4-oxalomesaconate tautomerase (galD).